Reading from the N-terminus, the 67-residue chain is Large ribosomal subunit protein eL24 (67 aa).

Zn(2+)-binding residues include Cys7, Cys10, Cys33, and Cys37. Residues 7–37 (CSYCGKEFEPGTGKMYVRNDGRVYFFCSRKC) form a C4-type zinc finger.

It belongs to the eukaryotic ribosomal protein eL24 family. As to quaternary structure, part of the 50S ribosomal subunit. Forms a cluster with proteins L3 and L14. Zn(2+) serves as cofactor.

Its function is as follows. Binds to the 23S rRNA. This Thermococcus sibiricus (strain DSM 12597 / MM 739) protein is Large ribosomal subunit protein eL24.